A 663-amino-acid chain; its full sequence is COBRA-like protein 9 (663 aa).

A signal peptide spans 1 to 23 (MGVLLPIFFGVLLLFTVTPPSMS). N-linked (GlcNAc...) asparagine glycans are attached at residues Asn63, Asn111, Asn121, Asn169, Asn203, Asn326, Asn355, Asn397, Asn409, Asn429, Asn470, Asn550, and Asn561. Ser638 is lipidated: GPI-anchor amidated serine. The propeptide at 639 to 663 (GGRRNGAITVLSFITFYVAAFMVLL) is removed in mature form.

The protein belongs to the COBRA family. As to expression, expressed only in flowers.

It localises to the cell membrane. The polypeptide is COBRA-like protein 9 (COBL9) (Arabidopsis thaliana (Mouse-ear cress)).